A 346-amino-acid chain; its full sequence is Large ribosomal subunit protein uL10 (346 aa).

The interval 307–346 is disordered; that stretch reads AAAVAKEPEKKEEVKEEEEEEEEEDHSEEDGMAGLGSLFG. Residues 321-337 are compositionally biased toward acidic residues; that stretch reads KEEEEEEEEEDHSEEDG.

Belongs to the universal ribosomal protein uL10 family. In terms of assembly, part of the 50S ribosomal subunit. Forms part of the ribosomal stalk which helps the ribosome interact with GTP-bound translation factors. Forms both a pentameric L10(L12)2(L12)2 and heptameric L10(L12)2(L12)2(L12)2 complex, where L10 forms an elongated spine to which the L12 dimers bind in a sequential fashion. The proportion of heptameric complexes increases during cell growth.

In terms of biological role, forms part of the ribosomal stalk, playing a central role in the interaction of the ribosome with GTP-bound translation factors. In Methanosarcina barkeri (strain Fusaro / DSM 804), this protein is Large ribosomal subunit protein uL10.